Here is a 194-residue protein sequence, read N- to C-terminus: Mersacidin decarboxylase (194 aa).

His75 is a catalytic residue.

This sequence belongs to the HFCD (homooligomeric flavin containing Cys decarboxylase) superfamily. As to quaternary structure, homododecamer. It depends on FAD as a cofactor.

Its pathway is antibiotic biosynthesis; mersacidin biosynthesis. Functionally, catalyzes the oxidative decarboxylation of the C-terminal cysteine residue of mersacidin to an aminoenethiol residue. The sequence is that of Mersacidin decarboxylase (mrsD) from Bacillus sp. (strain HIL-Y85/54728).